Reading from the N-terminus, the 340-residue chain is Anthranilate phosphoribosyltransferase (340 aa).

Residues G81, 84–85 (GD), T89, 91–94 (NIST), 109–117 (KHGNRNLSS), and A121 contribute to the 5-phospho-alpha-D-ribose 1-diphosphate site. G81 is an anthranilate binding site. Mg(2+) is bound at residue S93. An anthranilate-binding site is contributed by N112. Residue R167 coordinates anthranilate. Mg(2+)-binding residues include D226 and E227.

The protein belongs to the anthranilate phosphoribosyltransferase family. In terms of assembly, homodimer. It depends on Mg(2+) as a cofactor.

The catalysed reaction is N-(5-phospho-beta-D-ribosyl)anthranilate + diphosphate = 5-phospho-alpha-D-ribose 1-diphosphate + anthranilate. It functions in the pathway amino-acid biosynthesis; L-tryptophan biosynthesis; L-tryptophan from chorismate: step 2/5. Functionally, catalyzes the transfer of the phosphoribosyl group of 5-phosphorylribose-1-pyrophosphate (PRPP) to anthranilate to yield N-(5'-phosphoribosyl)-anthranilate (PRA). The chain is Anthranilate phosphoribosyltransferase from Ruegeria sp. (strain TM1040) (Silicibacter sp.).